Consider the following 115-residue polypeptide: Large ribosomal subunit protein bL19 (115 aa).

Belongs to the bacterial ribosomal protein bL19 family.

Its function is as follows. This protein is located at the 30S-50S ribosomal subunit interface and may play a role in the structure and function of the aminoacyl-tRNA binding site. This chain is Large ribosomal subunit protein bL19, found in Desulforapulum autotrophicum (strain ATCC 43914 / DSM 3382 / VKM B-1955 / HRM2) (Desulfobacterium autotrophicum).